The following is a 420-amino-acid chain: Glucose-1-phosphate adenylyltransferase (420 aa).

Alpha-D-glucose 1-phosphate-binding positions include Y107, G172, 187–188 (EK), and S205.

Belongs to the bacterial/plant glucose-1-phosphate adenylyltransferase family. In terms of assembly, homotetramer.

It carries out the reaction alpha-D-glucose 1-phosphate + ATP + H(+) = ADP-alpha-D-glucose + diphosphate. It functions in the pathway glycan biosynthesis; glycogen biosynthesis. Functionally, involved in the biosynthesis of ADP-glucose, a building block required for the elongation reactions to produce glycogen. Catalyzes the reaction between ATP and alpha-D-glucose 1-phosphate (G1P) to produce pyrophosphate and ADP-Glc. In Rhodopseudomonas palustris (strain BisB18), this protein is Glucose-1-phosphate adenylyltransferase.